The chain runs to 418 residues: F-box/LRR-repeat protein 14 (418 aa).

Residues 2–48 (ETHISCLFPELLAMIFGYLDVRDKGRAAQVCTAWRDAAYHKSVWRGV) enclose the F-box domain. The segment at 2 to 48 (ETHISCLFPELLAMIFGYLDVRDKGRAAQVCTAWRDAAYHKSVWRGV) is required for down-regulation of SNAI1. LRR repeat units follow at residues 144 to 163 (GLEV…GLLL), 170 to 191 (RLKS…GHLA), 203 to 225 (GLEQ…HISR), 229 to 250 (GLRL…LHLS), and 254 to 275 (SLRS…MHLA).

As to quaternary structure, part of a SCF (SKP1-cullin-F-box) ubiquitin-protein ligase complex. Interacts with SKP1 and CUL1. Interacts with SNAI1; the interaction requires the phosphorylation of the two serine residues in the substrate destruction motif D-S-G-X(2,3,4)-S.

The protein localises to the cytoplasm. In terms of biological role, substrate-recognition component of some SCF (SKP1-CUL1-F-box protein)-type E3 ubiquitin-protein ligase complexes. The SCF(FBXL14) complex acts by mediating ubiquitination and subsequent degradation of SNAI1. The protein is F-box/LRR-repeat protein 14 (FBXL14) of Homo sapiens (Human).